Consider the following 623-residue polypeptide: Probable lysophospholipase 5 (623 aa).

An N-terminal signal peptide occupies residues 1–19 (MKLSSFGLFLALQLLPALG). One can recognise a PLA2c domain in the interval 67 to 607 (ACPSGSLLRP…NQYCWNGTIA (541 aa)). Residues Asn-118, Asn-153, Asn-187, Asn-232, Asn-256, Asn-264, Asn-293, Asn-331, Asn-360, Asn-367, Asn-400, Asn-403, Asn-474, Asn-508, Asn-513, Asn-537, Asn-564, Asn-586, and Asn-603 are each glycosylated (N-linked (GlcNAc...) asparagine).

Belongs to the lysophospholipase family.

It is found in the secreted. The catalysed reaction is a 1-acyl-sn-glycero-3-phosphocholine + H2O = sn-glycerol 3-phosphocholine + a fatty acid + H(+). Catalyzes the release of fatty acids from lysophospholipids. This Schizosaccharomyces pombe (strain 972 / ATCC 24843) (Fission yeast) protein is Probable lysophospholipase 5 (plb5).